The sequence spans 609 residues: MFDAKNFLANVTHQPGVYRMFDEKGQVIYVGKAKDLKKRLSSYFRTNLNSKKTSALVSHIHSIETTITASETEALLLEHNYIKAFQPRYNVLLRDDKSYPYILLTKERHPRITSHRGSKKVQGEYFGPYPHAGAVRETLSLLQKLFPIRQCENSVYNNRSRPCLQYQIGRCSGPCIDGLVSDEEYQQQVDFARLFLQGKDQQVLEHLIKKMEQASMQLNFEQAAYFRDQIQAIRAVIEKQFVSNERLDDMDILAIAYQLGIACVQVLFIRQGKVLGNRSYFPKVPANTDLSELTETFVGQFYLQGHQGRIIPSTIIVDHVLNEKHELEVLLTEQAGRKVNIQDNVKGNKSKFLHLAQMNAQAALVTQLKQANLIQERYQALQELLSLTTIKRMECFDISHTMGEQTIASCVVFDTEGPLKSDYRRFNISGITAGDDYAAMEQALLKRYDRPLENEKIPDIIFIDGGKGQLNRALQVFAQLNVSWDKNKPLLIGVAKGVDRKAGLETLIISKQNKEVNLLPDSLALHLIQHIRDESHYHAIGGHRKKRQQAFTQSGLEAIKGVGAKRRQALLKYLGGMQGVKNATLAEISSVPGISAALAERIYETLRSE.

A GIY-YIG domain is found at His13–Val91. Residues Gln201–Val236 form the UVR domain.

It belongs to the UvrC family. In terms of assembly, interacts with UvrB in an incision complex.

It is found in the cytoplasm. Functionally, the UvrABC repair system catalyzes the recognition and processing of DNA lesions. UvrC both incises the 5' and 3' sides of the lesion. The N-terminal half is responsible for the 3' incision and the C-terminal half is responsible for the 5' incision. In Histophilus somni (strain 2336) (Haemophilus somnus), this protein is UvrABC system protein C.